The primary structure comprises 753 residues: Cytoplasmic polyadenylation element-binding protein 3 (753 aa).

A disordered region spans residues 111-286 (VGESTPSSAG…NGSWHGELPP (176 aa)). Composition is skewed to basic and acidic residues over residues 131–142 (KPTEKISVDEPP) and 175–188 (FGKEEQKPEPEVVK). Low complexity predominate over residues 227 to 239 (SPAKISSNSSSSS). A compositionally biased stretch (polar residues) spans 265–279 (SRQGLSNRDNLSNGS). The 23-residue stretch at 298 to 320 (IFVGGVPWDITEAALKDSFGEFG) folds into the RRM domain. The disordered stretch occupies residues 567–589 (KAYAGPHRRPHLTSNSLSKSHGC). Positions 578–589 (LTSNSLSKSHGC) are enriched in polar residues.

In terms of biological role, cytoplasmic polyadenylation element binding protein that binds to and regulates the translation of specific mRNAs. The protein is Cytoplasmic polyadenylation element-binding protein 3 (cpb-3) of Caenorhabditis briggsae.